Consider the following 253-residue polypeptide: Protein C1orf43 homolog (253 aa).

A helical transmembrane segment spans residues 11-31 (VNVVLVMAYGSLVFVLLFIFV). The disordered stretch occupies residues 194-213 (SGSSQRQHQSAAKDLTQSPE).

It localises to the membrane. It is found in the golgi apparatus. The protein resides in the mitochondrion. In terms of biological role, general regulator of phagocytosis. Required to uptake Gram negative bacterium by macrophages. In Bos taurus (Bovine), this protein is Protein C1orf43 homolog.